Reading from the N-terminus, the 324-residue chain is Probable UDP-sugar transporter protein SLC35A4 (324 aa).

Over 1–18 (MSVEDGGLPGLGGPGQAR) the chain is Cytoplasmic. Residues 19-39 (WTLMLLLSTATYGAHAPLLAL) form a helical membrane-spanning segment. At 40–52 (CHVDGRVPFRPSS) the chain is on the lumenal side. A helical membrane pass occupies residues 53–73 (AVLLTELTKLLLCALSLLVGW). At 74–85 (QAWPPRTPPWRQ) the chain is on the cytoplasmic side. Residues 86 to 106 (AAPFALSALLYGANNNLVIHL) form a helical membrane-spanning segment. The Lumenal segment spans residues 107 to 140 (QHYMDPSTYQVLSNLKIGSTALFYCLCLRRRLSA). A helical transmembrane segment spans residues 141 to 161 (RQGLALLLLMAAGACYAAGGL). Residues 162–177 (RDPGSPLPESPSTAAS) lie on the Cytoplasmic side of the membrane. A helical membrane pass occupies residues 178–198 (GPVPLHVTAPGLLLLLLYCLI). Over 199-214 (SGLSSVYTELLLKRQR) the chain is Lumenal. The chain crosses the membrane as a helical span at residues 215–235 (LPLALQNLFLYTFGVLLNLGL). The Cytoplasmic portion of the chain corresponds to 236-248 (HAGGGPGPGLLEG). Residues 249 to 271 (FSGWAALVVLSQALNGLLMSAVM) form a helical membrane-spanning segment. Topologically, residues 272–279 (KHGSSITR) are lumenal. A helical transmembrane segment spans residues 280-300 (LFVVSCSLVVNAVLSAALLRL). Topologically, residues 301 to 324 (QLTAAFFLAALLIGLAVHLYYGSR) are cytoplasmic.

The protein belongs to the nucleotide-sugar transporter family. SLC35A subfamily. As to quaternary structure, found in a complex with SLC35A2 and SLC35A3.

It localises to the golgi apparatus membrane. It carries out the reaction CDP-L-ribitol(in) + CDP(out) = CDP-L-ribitol(out) + CDP(in). Its function is as follows. Mediates the transport of CDP-ribitol. Does not exhibit CMP-sialic acid, UDP-galactose and UDP-N-acetylglucosamine transport activity. In Sus scrofa (Pig), this protein is Probable UDP-sugar transporter protein SLC35A4.